The chain runs to 339 residues: GATA transcription factor 5 (339 aa).

Disordered stretches follow at residues 68–88 (MVRV…RSSD), 126–145 (EYSG…WLTG), 163–206 (PVPA…PSSP), and 221–242 (ERPP…SGEL). Polar residues predominate over residues 126–136 (EYSGPNLTGTP). Residues 167 to 174 (KARSKRNR) carry the Nuclear localization signal motif. The segment covering 181–206 (SLGSSSSSGPSSSGSTSSSSSGPSSP) has biased composition (low complexity). The GATA-type zinc-finger motif lies at 245–299 (LQPQRKCSHCGVQKTPQWRAGPMGAKTLCNACGVRYKSGRLLPEYRPACSPTFSS). The disordered stretch occupies residues 314-339 (RKKEPTSDNETGLNQLVQSPQAVPSF). Residues 321 to 339 (DNETGLNQLVQSPQAVPSF) show a composition bias toward polar residues.

It belongs to the type IV zinc-finger family. Class A subfamily.

It is found in the nucleus. Its function is as follows. Transcriptional activator that specifically binds 5'-GATA-3' or 5'-GAT-3' motifs within gene promoters. May be involved in the regulation of some light-responsive genes. This chain is GATA transcription factor 5 (GATA5), found in Arabidopsis thaliana (Mouse-ear cress).